A 459-amino-acid polypeptide reads, in one-letter code: Hypotaurine/taurine--pyruvate aminotransferase (459 aa).

The residue at position 287 (K287) is an N6-(pyridoxal phosphate)lysine.

It belongs to the class-III pyridoxal-phosphate-dependent aminotransferase family. Requires pyridoxal 5'-phosphate as cofactor.

The enzyme catalyses hypotaurine + pyruvate = 2-sulfinoacetaldehyde + L-alanine. It catalyses the reaction taurine + pyruvate = sulfoacetaldehyde + L-alanine. It participates in organosulfur degradation. Its function is as follows. Converts hypotaurine to alanine and sulfinoacetaldehyde, which desulfinates spontaneously to acetaldehyde and sulfite. Can also catalyze the degradation of taurine into alanine and sulfoacetaldehyde, which is stable. Has 2-fold higher aminotransferase activity with hypotaurine as the substrate. This is Hypotaurine/taurine--pyruvate aminotransferase from Paracoccus denitrificans (strain Pd 1222).